Reading from the N-terminus, the 839-residue chain is Sodium/hydrogen exchanger 3 (839 aa).

Residues 1–32 form the signal peptide; it reads MPLGVRGTRREFRFPVWGLLLLALWMLPRALG. The Extracellular portion of the chain corresponds to 33–56; it reads VEEIPGPDSHEKQGFQIVTFKWHH. Residues 57-79 traverse the membrane as a helical segment; it reads VQDPYIIALWILVASLAKIVFHL. Topologically, residues 80–87 are cytoplasmic; sequence SHKVTSVV. A helical membrane pass occupies residues 88–107; the sequence is PESALLIVLGLILGGIVWAA. Residues 108 to 116 lie on the Extracellular side of the membrane; sequence DHIASFTLT. The chain crosses the membrane as a helical span at residues 117-134; that stretch reads PTVFFFYLLPPIVLDAGY. The Cytoplasmic segment spans residues 135–137; the sequence is FMP. Residues 138 to 173 traverse the membrane as a helical segment; sequence NRLFFGNLGTILLYAVIGTVWNAATTGLSLYGVYLS. A 1,2-diacyl-sn-glycero-3-phospho-(1D-myo-inositol)-binding residues include Gly-143, Gly-146, and Thr-147. The Extracellular segment spans residues 174-186; the sequence is GIMGDLSIGLLDF. The helical transmembrane segment at 187–208 threads the bilayer; it reads LLFGSLIAAVDPVAVLAVFEEV. Residues 209 to 210 are Cytoplasmic-facing; that stretch reads HV. The helical transmembrane segment at 211–242 threads the bilayer; it reads NDVLFIIVFGESLLNDAVTVVLYNVFDSFVSL. Topologically, residues 243–249 are extracellular; the sequence is GADKVTG. Residues 250–284 form a helical membrane-spanning segment; sequence VDCVKGIVSFFVVSLGGTLIGIIFAFLLSLVTRFT. At 285–286 the chain is on the cytoplasmic side; it reads KH. The helical transmembrane segment at 287-309 threads the bilayer; that stretch reads VRIIEPGFVFIISYLSYLTSEML. Residues 310–311 lie on the Extracellular side of the membrane; the sequence is SL. A helical transmembrane segment spans residues 312–328; it reads SAILAITFCGICCQKYV. At 329–335 the chain is on the cytoplasmic side; it reads KANISEQ. A helical transmembrane segment spans residues 336–364; it reads SATTVRYTMKMLASGAETIIFMFLGISAV. Topologically, residues 365-372 are extracellular; sequence DPAIWTWN. A helical membrane pass occupies residues 373-394; that stretch reads TAFILLTLVFISVYRAIGVVLQ. The Cytoplasmic segment spans residues 395–407; that stretch reads TWLLNKYRMVQLE. An a 1,2-diacyl-sn-glycero-3-phospho-(1D-myo-inositol)-binding site is contributed by Met-403. The helical transmembrane segment at 408–431 threads the bilayer; that stretch reads IIDQVVMSYGGLRGAVAYALVVLL. The Extracellular segment spans residues 432–438; the sequence is DEKKVKE. A helical membrane pass occupies residues 439-472; sequence KNLFVSTTIIVVFFTVIFQGLTIKPLVQWLKVKK. Over 473-839 the chain is Cytoplasmic; that stretch reads SEHREPKLNE…RSFLPESTHM (367 aa). A 1,2-diacyl-sn-glycero-3-phospho-(1D-myo-inositol)-binding residues include Gln-502, Ile-503, and His-505. Phosphoserine occurs at positions 560 and 568. Residues 581–595 form an interaction with EZR region; the sequence is RPSTVEASVSYLLRE. The interaction with NHERF4 stretch occupies residues 596–673; that stretch reads NVSTVCLDMQ…RKRLESFKST (78 aa). The interval 597 to 701 is interaction with AHCYL1; the sequence is VSTVCLDMQA…GQKRRNSSIP (105 aa). Residues Ser-598 and Ser-613 each carry the phosphoserine modification. Position 669 is a phosphoserine; by SGK1 (Ser-669). The span at 688–697 shows a compositional bias: basic residues; it reads KRERGQKRRN. Residues 688 to 710 are disordered; that stretch reads KRERGQKRRNSSIPNGKIPMESP. Phosphoserine is present on residues Ser-724, Ser-815, and Ser-818.

This sequence belongs to the monovalent cation:proton antiporter 1 (CPA1) transporter (TC 2.A.36) family. As to quaternary structure, homodimer. Found in the forms of complex and dynamic macromolecular complexes. Binds NHERF1 and NHERF2. Interacts with CHP1, CHP2 and SHANK2. Interacts with NHERF4 and interactions decrease in response to elevated calcium ion levels. Interacts with PDZK1 (via C-terminal PDZ domain). Interacts with AHCYL1; the interaction is required for SLC9A3 activity. Interacts with EZR; interaction targets SLC9A3 to the apical membrane. Interacts with SNX27 (via PDZ domains); directs SLC9A3 membrane insertion from early endosomes to the plasma membrane. Phosphorylated by PKA, which inhibits activity. Phosphorylation at Ser-669 by SGK1 is associated with increased abundance at the cell membrane.

It localises to the apical cell membrane. The protein resides in the cell membrane. It is found in the recycling endosome membrane. Its subcellular location is the early endosome membrane. It catalyses the reaction Na(+)(in) + H(+)(out) = Na(+)(out) + H(+)(in). Its activity is regulated as follows. Seems to switch between active and inactive modes in response to various stimuli. Activated directly or indirectly by membrane phosphatidylinositol (PIs). Regulated by a variety of auxiliary proteins, which facilitate the maturation, cell surface expression and function of the transporter. Inhibited specifically by the drug tenapanor. Plasma membrane Na(+)/H(+) antiporter. Exchanges intracellular H(+) ions for extracellular Na(+) in 1:1 stoichiometry, playing a key role in salt and fluid absorption and pH homeostasis. Major apical Na(+)/H(+) exchanger in kidney and intestine playing an important role in renal and intestine Na(+) absorption and blood pressure regulation. This is Sodium/hydrogen exchanger 3 (SLC9A3) from Didelphis virginiana (North American opossum).